We begin with the raw amino-acid sequence, 444 residues long: Probable D-serine dehydratase (444 aa).

Lys-118 carries the post-translational modification N6-(pyridoxal phosphate)lysine.

The protein belongs to the serine/threonine dehydratase family. DsdA subfamily. Pyridoxal 5'-phosphate serves as cofactor.

It catalyses the reaction D-serine = pyruvate + NH4(+). The chain is Probable D-serine dehydratase from Acinetobacter baumannii (strain ACICU).